The following is a 313-amino-acid chain: Methionyl-tRNA formyltransferase (313 aa).

A (6S)-5,6,7,8-tetrahydrofolate-binding site is contributed by 113 to 116; that stretch reads SLLP.

Belongs to the Fmt family.

It carries out the reaction L-methionyl-tRNA(fMet) + (6R)-10-formyltetrahydrofolate = N-formyl-L-methionyl-tRNA(fMet) + (6S)-5,6,7,8-tetrahydrofolate + H(+). In terms of biological role, attaches a formyl group to the free amino group of methionyl-tRNA(fMet). The formyl group appears to play a dual role in the initiator identity of N-formylmethionyl-tRNA by promoting its recognition by IF2 and preventing the misappropriation of this tRNA by the elongation apparatus. The polypeptide is Methionyl-tRNA formyltransferase (Francisella tularensis subsp. tularensis (strain FSC 198)).